The primary structure comprises 489 residues: Rhamnulokinase (489 aa).

13–17 contacts ATP; the sequence is ASSGR. C68 and C222 form a disulfide bridge. Substrate contacts are provided by residues G83 and 236-238; that span reads HDT. D237 serves as the catalytic Proton acceptor. Position 259 (T259) interacts with ATP. N296 contributes to the substrate binding site. Q304 contributes to the ATP binding site. An intrachain disulfide couples C353 to C370. Position 402 (G402) interacts with ATP. Cysteines 413 and 417 form a disulfide.

The protein belongs to the rhamnulokinase family. Requires Mg(2+) as cofactor.

It carries out the reaction L-rhamnulose + ATP = L-rhamnulose 1-phosphate + ADP + H(+). It functions in the pathway carbohydrate degradation; L-rhamnose degradation; glycerone phosphate from L-rhamnose: step 2/3. Involved in the catabolism of L-rhamnose (6-deoxy-L-mannose). Catalyzes the transfer of the gamma-phosphate group from ATP to the 1-hydroxyl group of L-rhamnulose to yield L-rhamnulose 1-phosphate. The chain is Rhamnulokinase from Salmonella paratyphi B (strain ATCC BAA-1250 / SPB7).